Consider the following 83-residue polypeptide: Small ribosomal subunit protein bS16 (83 aa).

It belongs to the bacterial ribosomal protein bS16 family.

The protein is Small ribosomal subunit protein bS16 of Shewanella woodyi (strain ATCC 51908 / MS32).